We begin with the raw amino-acid sequence, 256 residues long: Matrix protein (256 aa).

The protein belongs to the pneumovirinae M protein family. As to quaternary structure, forms dimers. Forms higher-order oligomers. Interacts with glycoprotein G (via N-terminus). Interacts with protein M2-1; this interaction directs the matrix protein localization to cytoplasmic inclusions comprising viral proteins L, N, P, and M2-1 and mediates the matrix protein association with the nucleocapsid.

The protein localises to the virion. Its subcellular location is the host cytoplasm. The protein resides in the host nucleus. It localises to the host cell membrane. Functionally, plays a crucial role in virus assembly into filaments and budding. Early in infection, localizes in the nucleus where it may inhibit host cell transcription. Later in infection, traffics to the cytoplasm to associate with inclusion bodies, the site of viral transcription and replication. During virus assembly and budding, acts as a bridge between the nucleocapsid and the lipid bilayer. This Ovine respiratory syncytial virus (strain WSU 83-1578) (ORSV) protein is Matrix protein (M).